We begin with the raw amino-acid sequence, 122 residues long: MNAVAEAPVTEDVPAPFVFTDSAADKVKQLIEEEGNAELKLRVFVQGGGCSGFQYGFTFDEEVNEDDTTMVKNGVTLLIDSMSYQYLVGAEIDYKEDINGAQFVIKNPNASTTCGCGSSFSV.

Positions 50, 114, and 116 each coordinate iron-sulfur cluster.

Belongs to the HesB/IscA family. As to quaternary structure, homodimer. It depends on iron-sulfur cluster as a cofactor.

Functionally, required for insertion of 4Fe-4S clusters. The protein is Putative iron-sulfur cluster insertion protein ErpA of Cupriavidus necator (strain ATCC 17699 / DSM 428 / KCTC 22496 / NCIMB 10442 / H16 / Stanier 337) (Ralstonia eutropha).